Here is a 339-residue protein sequence, read N- to C-terminus: Phosphate acyltransferase (339 aa).

Belongs to the PlsX family. Homodimer. Probably interacts with PlsY.

It is found in the cytoplasm. It carries out the reaction a fatty acyl-[ACP] + phosphate = an acyl phosphate + holo-[ACP]. It functions in the pathway lipid metabolism; phospholipid metabolism. Catalyzes the reversible formation of acyl-phosphate (acyl-PO(4)) from acyl-[acyl-carrier-protein] (acyl-ACP). This enzyme utilizes acyl-ACP as fatty acyl donor, but not acyl-CoA. The sequence is that of Phosphate acyltransferase from Helicobacter pylori (strain J99 / ATCC 700824) (Campylobacter pylori J99).